Here is a 66-residue protein sequence, read N- to C-terminus: MNTGFFFFVIMATGLVLTFDTIHAEDKLKCTKTDDCAKYCSQFTDVHPACLGGYCECLRWEGGISS.

Residues 1-24 (MNTGFFFFVIMATGLVLTFDTIHA) form the signal peptide. 3 disulfide bridges follow: cysteine 30–cysteine 50, cysteine 36–cysteine 55, and cysteine 40–cysteine 57.

The protein belongs to the short scorpion toxin superfamily. Potassium channel inhibitor family. Alpha-KTx 30 subfamily. In terms of tissue distribution, expressed by the venom gland.

The protein localises to the secreted. Its function is as follows. inhibits Kv1.3/KCNA3 channel (1 uM of the toxin inhibits currents by 64.1%). This Scorpiops margerisonae (Scorpion) protein is Potassium channel toxin alpha-KTx 30.1.